The primary structure comprises 464 residues: MSNLFQREDDIVALATPLLSSALCVIRSSGISSIEKFSKMFSDPKRLLEASGHTIHYGYLIDKEICEKLDEVVVCIYRAPKSFTGQNSIEVMAHGSPIGIKRIIGCFLKVGFRMAEPGEFTLRAFLAGKLDLTKAEAVNELISAKTNKTHSLAVNKLSGSLFAKIDLIKKDILNFLSALSVHLDYETSEYEVAIPFEIISKSRDELKRLVDSYNTARKLDYGIALVLAGSVNVGKSSLFNLLLKEDRAIVSSYAGTTRDYIQASFEFDGILFNVFDTAGLRETTDFVEQLGIVKSNSLIKEASLVLYVIDLSARLTNDDLKFIDSYKGHSKVIFVLNKMDLEPNRQTVEFFNSGNINSSNLVKISTKTLFGIDSLYDKIRSLTCFDYIDIDAYDVIVSSSRQAELLKKAYTLIIELLNKIEKDISYDMLAFDVYEVLNFLGEITGEVTSEDVLNNMFKNFCLGK.

Residues arginine 27, glutamate 90, and lysine 129 each coordinate (6S)-5-formyl-5,6,7,8-tetrahydrofolate. Residues 222-384 (GIALVLAGSV…LYDKIRSLTC (163 aa)) form the TrmE-type G domain. GTP-binding positions include 232–237 (NVGKSS), 251–257 (SSYAGTT), and 276–279 (DTAG). Mg(2+) contacts are provided by serine 236 and threonine 257. Lysine 464 provides a ligand contact to (6S)-5-formyl-5,6,7,8-tetrahydrofolate.

It belongs to the TRAFAC class TrmE-Era-EngA-EngB-Septin-like GTPase superfamily. TrmE GTPase family. Homodimer. Heterotetramer of two MnmE and two MnmG subunits. K(+) serves as cofactor.

Its subcellular location is the cytoplasm. Functionally, exhibits a very high intrinsic GTPase hydrolysis rate. Involved in the addition of a carboxymethylaminomethyl (cmnm) group at the wobble position (U34) of certain tRNAs, forming tRNA-cmnm(5)s(2)U34. The sequence is that of tRNA modification GTPase MnmE from Borrelia turicatae (strain 91E135).